The chain runs to 559 residues: Glucose-6-phosphate isomerase (559 aa).

The active-site Proton donor is the Glu363. Catalysis depends on residues His394 and Lys523.

Belongs to the GPI family.

Its subcellular location is the cytoplasm. It catalyses the reaction alpha-D-glucose 6-phosphate = beta-D-fructose 6-phosphate. It functions in the pathway carbohydrate biosynthesis; gluconeogenesis. It participates in carbohydrate degradation; glycolysis; D-glyceraldehyde 3-phosphate and glycerone phosphate from D-glucose: step 2/4. In terms of biological role, catalyzes the reversible isomerization of glucose-6-phosphate to fructose-6-phosphate. The polypeptide is Glucose-6-phosphate isomerase (Bartonella henselae (strain ATCC 49882 / DSM 28221 / CCUG 30454 / Houston 1) (Rochalimaea henselae)).